The primary structure comprises 490 residues: Cyclin-A2-1 (490 aa).

A disordered region spans residues 34-76 (FAPSVSLPARTERKQTAKGKTKRGALDEITSASTATSAPQPKR). The span at 63–72 (TSASTATSAP) shows a compositional bias: polar residues.

It belongs to the cyclin family. Cyclin AB subfamily.

The polypeptide is Cyclin-A2-1 (CYCA2-1) (Oryza sativa subsp. japonica (Rice)).